Consider the following 1337-residue polypeptide: Nucleoporin POM152 (1337 aa).

Residues 1 to 48 are disordered; the sequence is MEHRYNVFNDTPRGNHWMGSSVSGSPRPSYSSRPNVNTTRRFQYSDDE. The Cytoplasmic portion of the chain corresponds to 1-110; the sequence is MEHRYNVFND…TDVLEISKQR (110 aa). A pore side region spans residues 1–175; sequence MEHRYNVFND…SFNIPRLTFK (175 aa). Residues 19–37 are compositionally biased toward low complexity; sequence GSSVSGSPRPSYSSRPNVN. Phosphoserine is present on residues S45 and S60. The chain crosses the membrane as a helical span at residues 111–131; sequence TFAVILFLIIQCYKIYDLVIL. At 132-148 the chain is on the perinuclear space side; sequence KSGLPLSGLLFKNYRFN. The helical transmembrane segment at 149–169 threads the bilayer; it reads FISKYFIIDSFFLYVLPSFNI. Residues 170 to 172 are Cytoplasmic-facing; that stretch reads PRL. Residues 173–193 traverse the membrane as a helical segment; sequence TFKPWVVYLQILAMLLLNIFI. The Perinuclear space portion of the chain corresponds to 194 to 1337; it reads SSDHEFVLIS…FAKNDLFFNN (1144 aa). The interval 196–1337 is cisternal side; it reads DHEFVLISLI…FAKNDLFFNN (1142 aa). N280 is a glycosylation site (N-linked (GlcNAc...) asparagine). Repeat copies occupy residues 390–413, 626–650, 732–755, 836–859, 943–966, 1058–1077, 1157–1178, and 1253–1276. Positions 390-1276 are 8 X 24 AA approximate repeats; the sequence is DRCIGDSDNV…EGTPPFSLTY (887 aa).

In terms of assembly, component of the nuclear pore complex (NPC). NPC constitutes the exclusive means of nucleocytoplasmic transport. NPCs allow the passive diffusion of ions and small molecules and the active, nuclear transport receptor-mediated bidirectional transport of macromolecules such as proteins, RNAs, ribonucleoparticles (RNPs), and ribosomal subunits across the nuclear envelope. Due to its 8-fold rotational symmetry, all subunits are present with 8 copies or multiples thereof. Interacts with NUP188. In terms of processing, the N-terminus is blocked. Phosphorylated by CDC28.

It is found in the nucleus. Its subcellular location is the nuclear pore complex. The protein resides in the nucleus membrane. Functionally, functions as a component of the nuclear pore complex (NPC). NPC components, collectively referred to as nucleoporins (NUPs), can play the role of both NPC structural components and of docking or interaction partners for transiently associated nuclear transport factors. POM152 is important for the de novo assembly of NPCs. In Saccharomyces cerevisiae (strain ATCC 204508 / S288c) (Baker's yeast), this protein is Nucleoporin POM152 (POM152).